A 241-amino-acid polypeptide reads, in one-letter code: Uridylate kinase (241 aa).

12–15 (KLSG) serves as a coordination point for ATP. The interval 20 to 25 (GDKGTG) is involved in allosteric activation by GTP. Glycine 54 provides a ligand contact to UMP. 2 residues coordinate ATP: glycine 55 and arginine 59. UMP contacts are provided by residues aspartate 74 and 135-142 (TGSPYFST). ATP contacts are provided by asparagine 163, tyrosine 169, and aspartate 172.

Belongs to the UMP kinase family. In terms of assembly, homohexamer.

Its subcellular location is the cytoplasm. The enzyme catalyses UMP + ATP = UDP + ADP. It functions in the pathway pyrimidine metabolism; CTP biosynthesis via de novo pathway; UDP from UMP (UMPK route): step 1/1. With respect to regulation, allosterically activated by GTP. Inhibited by UTP. In terms of biological role, catalyzes the reversible phosphorylation of UMP to UDP. The chain is Uridylate kinase from Pediococcus pentosaceus (strain ATCC 25745 / CCUG 21536 / LMG 10740 / 183-1w).